The primary structure comprises 335 residues: DNA polymerase beta (335 aa).

Residue lysine 41 forms a Glycyl lysine isopeptide (Lys-Gly) (interchain with G-Cter in ubiquitin) linkage. Lysine 60 serves as a coordination point for K(+). Lysine 60 is a Na(+) binding site. A Glycyl lysine isopeptide (Lys-Gly) (interchain with G-Cter in ubiquitin) cross-link involves residue lysine 61. The K(+) site is built by leucine 62 and valine 65. The Na(+) site is built by leucine 62 and valine 65. Catalysis depends on lysine 72, which acts as the Nucleophile; Schiff-base intermediate with DNA; for 5'-dRP lyase activity. N6-acetyllysine is present on lysine 72. A Glycyl lysine isopeptide (Lys-Gly) (interchain with G-Cter in ubiquitin) cross-link involves residue lysine 81. Arginine 83 bears the Omega-N-methylarginine; by PRMT6 mark. Positions 101, 103, and 106 each coordinate K(+). Na(+)-binding residues include threonine 101, valine 103, and isoleucine 106. Position 149 (arginine 149) interacts with a 2'-deoxyribonucleoside 5'-triphosphate. Arginine 152 carries the post-translational modification Omega-N-methylarginine; by PRMT6. Positions 180, 183, 189, and 190 each coordinate a 2'-deoxyribonucleoside 5'-triphosphate. A DNA-binding region spans residues 183–192 (RGAESSGDMD). 3 residues coordinate Mg(2+): aspartate 190, aspartate 192, and aspartate 256.

The protein belongs to the DNA polymerase type-X family. In terms of assembly, monomer. Binds single-stranded DNA (ssDNA). Interacts with APEX1, LIG1, LIG3, FEN1, PCNA and XRCC1. Interacts with HUWE1/ARF-BP1, STUB1/CHIP and USP47. Interacts with FAM168A. Mg(2+) is required as a cofactor. Post-translationally, methylation by PRMT6 stimulates the polymerase activity by enhancing DNA binding and processivity. Ubiquitinated at Lys-41, Lys-61 and Lys-81: monoubiquitinated by HUWE1/ARF-BP1. Monoubiquitinated protein is then the target of STUB1/CHIP, which catalyzes polyubiquitination from monoubiquitin, leading to degradation by the proteasome. USP47 mediates the deubiquitination of monoubiquitinated protein, preventing polyubiquitination by STUB1/CHIP and its subsequent degradation.

The protein resides in the nucleus. The protein localises to the cytoplasm. The enzyme catalyses DNA(n) + a 2'-deoxyribonucleoside 5'-triphosphate = DNA(n+1) + diphosphate. The catalysed reaction is a 5'-end 2'-deoxyribose-2'-deoxyribonucleotide-DNA = (2E,4S)-4-hydroxypenten-2-al-5-phosphate + a 5'-end 5'-phospho-2'-deoxyribonucleoside-DNA + H(+). It catalyses the reaction 2'-deoxyribonucleotide-(2'-deoxyribose 5'-phosphate)-2'-deoxyribonucleotide-DNA = a 3'-end 2'-deoxyribonucleotide-(2,3-dehydro-2,3-deoxyribose 5'-phosphate)-DNA + a 5'-end 5'-phospho-2'-deoxyribonucleoside-DNA + H(+). Repair polymerase that plays a key role in base-excision repair. During this process, the damaged base is excised by specific DNA glycosylases, the DNA backbone is nicked at the abasic site by an apurinic/apyrimidic (AP) endonuclease, and POLB removes 5'-deoxyribose-phosphate from the preincised AP site acting as a 5'-deoxyribose-phosphate lyase (5'-dRP lyase); through its DNA polymerase activity, it adds one nucleotide to the 3' end of the arising single-nucleotide gap. Conducts 'gap-filling' DNA synthesis in a stepwise distributive fashion rather than in a processive fashion as for other DNA polymerases. It is also able to cleave sugar-phosphate bonds 3' to an intact AP site, acting as an AP lyase. This Mus musculus (Mouse) protein is DNA polymerase beta (Polb).